Here is a 292-residue protein sequence, read N- to C-terminus: UDP-3-O-acyl-N-acetylglucosamine deacetylase (292 aa).

The Zn(2+) site is built by His-76, His-232, and Asp-236. His-259 (proton donor) is an active-site residue.

This sequence belongs to the LpxC family. Zn(2+) serves as cofactor.

It carries out the reaction a UDP-3-O-[(3R)-3-hydroxyacyl]-N-acetyl-alpha-D-glucosamine + H2O = a UDP-3-O-[(3R)-3-hydroxyacyl]-alpha-D-glucosamine + acetate. It functions in the pathway glycolipid biosynthesis; lipid IV(A) biosynthesis; lipid IV(A) from (3R)-3-hydroxytetradecanoyl-[acyl-carrier-protein] and UDP-N-acetyl-alpha-D-glucosamine: step 2/6. Catalyzes the hydrolysis of UDP-3-O-myristoyl-N-acetylglucosamine to form UDP-3-O-myristoylglucosamine and acetate, the committed step in lipid A biosynthesis. The polypeptide is UDP-3-O-acyl-N-acetylglucosamine deacetylase (Thermodesulfovibrio yellowstonii (strain ATCC 51303 / DSM 11347 / YP87)).